Consider the following 31-residue polypeptide: U1-theraphotoxin-Cv1a (31 aa).

Intrachain disulfides connect Cys2-Cys16, Cys9-Cys21, and Cys15-Cys28.

Expressed by the venom gland.

It localises to the secreted. Its function is as follows. Insecticidal toxin that induces reversible paralysis in crickets but not in cockroaches and mice. Molecular target unknown. The sequence is that of U1-theraphotoxin-Cv1a from Coremiocnemis valida (Singapore tarantula).